A 341-amino-acid polypeptide reads, in one-letter code: DnaJ homolog subfamily C member 22 (341 aa).

The TM2 domain maps to 4 to 50 (GLLMTYALWAFGGPVGLHHLYLGRDSHALLWMLTLGGGGLGWLWEFW). Helical transmembrane passes span 5 to 25 (LLMT…HLYL), 30 to 50 (HALL…WEFW), 81 to 101 (FASQ…SLSS), 105 to 125 (FYIV…AAVG), 135 to 155 (LGAA…ILPI), 185 to 205 (VGLA…YNTA), and 232 to 252 (VESV…APGF). Positions 277-341 (LAHQVLGIPE…QPKKPRASWR (65 aa)) constitute a J domain.

The protein localises to the membrane. May function as a co-chaperone. The polypeptide is DnaJ homolog subfamily C member 22 (Dnajc22) (Rattus norvegicus (Rat)).